A 190-amino-acid chain; its full sequence is Acireductone dioxygenase (190 aa).

Positions 101, 103, 107, and 145 each coordinate Fe(2+). The Ni(2+) site is built by His101, His103, Glu107, and His145.

It belongs to the acireductone dioxygenase (ARD) family. In terms of assembly, monomer. Requires Fe(2+) as cofactor. The cofactor is Ni(2+).

The enzyme catalyses 1,2-dihydroxy-5-(methylsulfanyl)pent-1-en-3-one + O2 = 3-(methylsulfanyl)propanoate + CO + formate + 2 H(+). The catalysed reaction is 1,2-dihydroxy-5-(methylsulfanyl)pent-1-en-3-one + O2 = 4-methylsulfanyl-2-oxobutanoate + formate + 2 H(+). Its pathway is amino-acid biosynthesis; L-methionine biosynthesis via salvage pathway; L-methionine from S-methyl-5-thio-alpha-D-ribose 1-phosphate: step 5/6. Catalyzes 2 different reactions between oxygen and the acireductone 1,2-dihydroxy-3-keto-5-methylthiopentene (DHK-MTPene) depending upon the metal bound in the active site. Fe-containing acireductone dioxygenase (Fe-ARD) produces formate and 2-keto-4-methylthiobutyrate (KMTB), the alpha-ketoacid precursor of methionine in the methionine recycle pathway. Ni-containing acireductone dioxygenase (Ni-ARD) produces methylthiopropionate, carbon monoxide and formate, and does not lie on the methionine recycle pathway. This chain is Acireductone dioxygenase, found in Saccharopolyspora erythraea (strain ATCC 11635 / DSM 40517 / JCM 4748 / NBRC 13426 / NCIMB 8594 / NRRL 2338).